We begin with the raw amino-acid sequence, 386 residues long: PqqA peptide cyclase (386 aa).

The Radical SAM core domain maps to 9–228 (SKPPLWLLAE…RQYIDQHHLK (220 aa)). Residues cysteine 23, cysteine 27, and cysteine 30 each contribute to the [4Fe-4S] cluster site.

Belongs to the radical SAM superfamily. PqqE family. As to quaternary structure, interacts with PqqD. The interaction is necessary for activity of PqqE. Requires [4Fe-4S] cluster as cofactor.

It carries out the reaction [PQQ precursor protein] + S-adenosyl-L-methionine = E-Y cross-linked-[PQQ precursor protein] + 5'-deoxyadenosine + L-methionine + H(+). Its pathway is cofactor biosynthesis; pyrroloquinoline quinone biosynthesis. In terms of biological role, catalyzes the cross-linking of a glutamate residue and a tyrosine residue in the PqqA protein as part of the biosynthesis of pyrroloquinoline quinone (PQQ). The polypeptide is PqqA peptide cyclase (Acinetobacter baylyi (strain ATCC 33305 / BD413 / ADP1)).